The sequence spans 428 residues: 3-phosphoshikimate 1-carboxyvinyltransferase (428 aa).

The 3-phosphoshikimate site is built by K20, S21, and R25. K20 lines the phosphoenolpyruvate pocket. 2 residues coordinate phosphoenolpyruvate: G92 and R120. 4 residues coordinate 3-phosphoshikimate: S166, Q168, D314, and K341. Q168 lines the phosphoenolpyruvate pocket. Catalysis depends on D314, which acts as the Proton acceptor. R345 and R387 together coordinate phosphoenolpyruvate.

The protein belongs to the EPSP synthase family. As to quaternary structure, monomer.

The protein localises to the cytoplasm. It carries out the reaction 3-phosphoshikimate + phosphoenolpyruvate = 5-O-(1-carboxyvinyl)-3-phosphoshikimate + phosphate. The protein operates within metabolic intermediate biosynthesis; chorismate biosynthesis; chorismate from D-erythrose 4-phosphate and phosphoenolpyruvate: step 6/7. In terms of biological role, catalyzes the transfer of the enolpyruvyl moiety of phosphoenolpyruvate (PEP) to the 5-hydroxyl of shikimate-3-phosphate (S3P) to produce enolpyruvyl shikimate-3-phosphate and inorganic phosphate. In Listeria monocytogenes serotype 4b (strain CLIP80459), this protein is 3-phosphoshikimate 1-carboxyvinyltransferase.